A 277-amino-acid chain; its full sequence is Small ribosomal subunit protein uS2 (277 aa).

The span at 228–241 (YEERLQAETDKDAE) shows a compositional bias: basic and acidic residues. Residues 228–277 (YEERLQAETDKDAESSTVQQEENPEADIPESIETKESVSAAADSDLDENE) form a disordered region.

The protein belongs to the universal ribosomal protein uS2 family.

In Syntrophus aciditrophicus (strain SB), this protein is Small ribosomal subunit protein uS2.